The sequence spans 116 residues: Ribosome-binding factor A (116 aa).

This sequence belongs to the RbfA family. In terms of assembly, monomer. Binds 30S ribosomal subunits, but not 50S ribosomal subunits or 70S ribosomes.

The protein resides in the cytoplasm. Functionally, one of several proteins that assist in the late maturation steps of the functional core of the 30S ribosomal subunit. Associates with free 30S ribosomal subunits (but not with 30S subunits that are part of 70S ribosomes or polysomes). Required for efficient processing of 16S rRNA. May interact with the 5'-terminal helix region of 16S rRNA. This chain is Ribosome-binding factor A, found in Clostridium perfringens (strain 13 / Type A).